A 201-amino-acid polypeptide reads, in one-letter code: uncharacterized protein (201 aa).

The disordered stretch occupies residues 121-141; that stretch reads HHRTRPGRGPGPRPGGSAMAG.

This is an uncharacterized protein from Mycobacterium tuberculosis (strain ATCC 25618 / H37Rv).